The following is a 374-amino-acid chain: DNA replication and repair protein RecF (374 aa).

30 to 37 contacts ATP; it reads GPNAQGKS.

It belongs to the RecF family.

Its subcellular location is the cytoplasm. Its function is as follows. The RecF protein is involved in DNA metabolism; it is required for DNA replication and normal SOS inducibility. RecF binds preferentially to single-stranded, linear DNA. It also seems to bind ATP. In Acaryochloris marina (strain MBIC 11017), this protein is DNA replication and repair protein RecF.